The primary structure comprises 101 residues: NAD(P)H-quinone oxidoreductase subunit 4L, chloroplastic (101 aa).

3 helical membrane passes run 2–22 (MLEHVLVLSAYLFSIGIYGLI), 32–52 (MCLELILNAVNMNLVTFSDLF), and 61–81 (IFSIFVIAIAAAEAAIGPAIV).

Belongs to the complex I subunit 4L family. As to quaternary structure, NDH is composed of at least 16 different subunits, 5 of which are encoded in the nucleus.

Its subcellular location is the plastid. It localises to the chloroplast thylakoid membrane. It carries out the reaction a plastoquinone + NADH + (n+1) H(+)(in) = a plastoquinol + NAD(+) + n H(+)(out). It catalyses the reaction a plastoquinone + NADPH + (n+1) H(+)(in) = a plastoquinol + NADP(+) + n H(+)(out). Its function is as follows. NDH shuttles electrons from NAD(P)H:plastoquinone, via FMN and iron-sulfur (Fe-S) centers, to quinones in the photosynthetic chain and possibly in a chloroplast respiratory chain. The immediate electron acceptor for the enzyme in this species is believed to be plastoquinone. Couples the redox reaction to proton translocation, and thus conserves the redox energy in a proton gradient. In Chloranthus spicatus (Chulantree), this protein is NAD(P)H-quinone oxidoreductase subunit 4L, chloroplastic.